Reading from the N-terminus, the 316-residue chain is Very-long-chain 3-oxooacyl-coA reductase let-767 (316 aa).

Residues 47-76 (ASWA…NVLL) and Asp106 each bind NADP(+). Ser189 lines the substrate pocket. The active-site Proton acceptor is the Tyr202. Residue Lys206 participates in NADP(+) binding.

This sequence belongs to the short-chain dehydrogenases/reductases (SDR) family. 17-beta-HSD 3 subfamily. As to expression, expressed in the gut of larva and adult.

The enzyme catalyses a very-long-chain (3R)-3-hydroxyacyl-CoA + NADP(+) = a very-long-chain 3-oxoacyl-CoA + NADPH + H(+). It catalyses the reaction (omega-1)-methyl-(3R)-hydroxy-fatty acyl-CoA + NADP(+) = (omega-1)-methyl-3-oxo-fatty acyl-CoA + NADPH + H(+). The catalysed reaction is a 17beta-hydroxy steroid + NADP(+) = a 17-oxo steroid + NADPH + H(+). It participates in lipid metabolism; fatty acid biosynthesis. In terms of biological role, required for branched-chain fatty acid synthesis (such as (omega-1)-methyl-fatty acids). Catalyzes the reduction of the 3-keto-fatty acyl-CoA intermediate that is formed in each cycle of fatty acid elongation. Very long-chain fatty acids (VLCFAs) serve as precursors for ceramide and sphingolipids. Involved in hormone production as it metabolizes 4-androstendione (androst-4-ene-3,17-dione) into testosterone and estrone into estradiol (17beta-estradiol) in vitro, but the physiological steroid substrate is unknown. The chain is Very-long-chain 3-oxooacyl-coA reductase let-767 (let-767) from Caenorhabditis elegans.